A 317-amino-acid chain; its full sequence is Spore protein CgeB (317 aa).

Its function is as follows. May be involved in maturation of the outermost layer of the spore. May act as a glycosyltransferase that contributes to the glycosylation state of the spore. This is Spore protein CgeB from Bacillus subtilis (strain 168).